The chain runs to 303 residues: 2-dehydropantoate 2-reductase (303 aa).

Residues 7 to 12, N98, and A122 contribute to the NADP(+) site; that span reads GCGALG. Position 98 (N98) interacts with substrate. K176 functions as the Proton donor in the catalytic mechanism. The substrate site is built by N180, N184, N194, and S244. An NADP(+)-binding site is contributed by E256.

The protein belongs to the ketopantoate reductase family. As to quaternary structure, monomer.

The protein resides in the cytoplasm. It carries out the reaction (R)-pantoate + NADP(+) = 2-dehydropantoate + NADPH + H(+). It functions in the pathway cofactor biosynthesis; (R)-pantothenate biosynthesis; (R)-pantoate from 3-methyl-2-oxobutanoate: step 2/2. Catalyzes the NADPH-dependent reduction of ketopantoate into pantoic acid. Has a strong preference for NADPH over NADH as the electron acceptor. Pantoate, ketoisovalerate, oxaloacetate, pyruvate, 3-hydroxypyruvate, alpha-ketoglutarate, alpha-ketobutyrate, and acetaldehyde cannot serve as substrates for reduction. The chain is 2-dehydropantoate 2-reductase from Salmonella typhimurium (strain LT2 / SGSC1412 / ATCC 700720).